The following is a 508-amino-acid chain: Fc receptor-like protein 2 (508 aa).

A signal peptide spans 1–19 (MLLWSLLVIFDAVTEQADS). Ig-like C2-type domains follow at residues 20 to 98 (LTLV…SNIV), 109 to 187 (PVLT…HRIR), 201 to 290 (PISN…KVVN), and 300 to 387 (PVLT…VSIS). The Extracellular portion of the chain corresponds to 20–401 (LTLVAPSSVF…YRRDLMTAGV (382 aa)). An intrachain disulfide couples C128 to C177. 5 N-linked (GlcNAc...) asparagine glycosylation sites follow: N204, N234, N343, N355, and N365. 2 cysteine pairs are disulfide-bonded: C226–C275 and C321–C368. A helical transmembrane segment spans residues 402–422 (LWGLFGVLGFTGVALLLYALF). Residues 423 to 508 (HKISGESSAT…QVIYSSVKKS (86 aa)) are Cytoplasmic-facing. The disordered stretch occupies residues 429–453 (SSATNEPRGASRPNPQEFTYSSPTP). A compositionally biased stretch (polar residues) spans 441–452 (PNPQEFTYSSPT). 4 consecutive short sequence motifs (ITIM motif) follow at residues 446-451 (FTYSSP), 460-465 (PVYVNV), 472-477 (VVYSQV), and 500-505 (VIYSSV).

In terms of assembly, the tyrosine-phosphorylated isoform 2 interacts with PTPN6. In terms of processing, isoform 2 is N- and O-glycosylated, and phosphorylated. As to expression, expressed in the secondary lymphoid organs, spleen and lymph node. Expression is limited to the mature B-cell lines. Highly expressed in CD19 and within the mantle zones of the tonsil tissue. Isoform 2 is expressed in the spleen, peripheral blood and bone marrow. Isoform 2 and isoform 4 are expressed in B-cell lines. Preferentially expressed in memory B-cells (at protein level).

Its subcellular location is the cell membrane. Its function is as follows. May have an regulatory role in normal and neoplastic B cell development. The polypeptide is Fc receptor-like protein 2 (FCRL2) (Homo sapiens (Human)).